A 454-amino-acid polypeptide reads, in one-letter code: Death-associated protein kinase 3 (454 aa).

In terms of domain architecture, Protein kinase spans 13 to 275 (YEMGEELGSG…IAQSLEHSWI (263 aa)). Residues 19 to 27 (LGSGQFAIV) and lysine 42 each bind ATP. The residue at position 50 (serine 50) is a Phosphoserine; by autocatalysis. 2 residues coordinate pyridone 6: glutamate 94 and valine 96. Aspartate 139 acts as the Proton acceptor in catalysis. Residues 161–204 (DFGIAHKIEAGNEFKNIFGTPEFVAPEIVNYEPLGLEADMWSIG) are activation segment. Phosphothreonine occurs at positions 180 and 225. At threonine 265 the chain carries Phosphothreonine; by autocatalysis and ROCK1. Threonine 299 is subject to Phosphothreonine; by autocatalysis, DAPK1 and ROCK1. Threonine 306 bears the Phosphothreonine; by autocatalysis mark. Residue serine 309 is modified to Phosphoserine; by DAPK1. Serine 311 is subject to Phosphoserine; by autocatalysis and DAPK1. Phosphoserine; by DAPK1 is present on residues serine 312, serine 318, and serine 326. The leucine-zipper stretch occupies residues 427-441 (VASEMRFVQDLVRAL).

The protein belongs to the protein kinase superfamily. CAMK Ser/Thr protein kinase family. DAP kinase subfamily. Homooligomer in its kinase-active form (homotrimers and homodimers are reported); monomeric in its kinase-inactive form. Homodimerization is required for activation segment autophosphorylation. Isoform 1 and isoform 2 interact with myosin and PPP1R12A; interaction of isoform 1 with PPP1R12A is inhibited by RhoA dominant negative form. Interacts with NLK, DAXX, STAT3, RHOD (GTP-bound form) and TCP10L. Interacts with PAWR; the interaction is reported conflictingly: according to PubMed:17953487 does not interact with PAWR. Interacts with ULK1; may be a substrate of ULK1. Interacts with LUZP1; the interaction is likely to occur throughout the cell cycle and reduces the LUZP1-mediated suppression of MYL9 phosphorylation. Mg(2+) serves as cofactor. In terms of processing, the phosphorylation status is critical for kinase activity, oligomerization and intracellular localization. Phosphorylation at Thr-180, Thr-225 and Thr-265 is essential for activity. The phosphorylated form is localized in the cytoplasm promoted by phosphorylation at Thr-299; nuclear translocation or retention is maximal when it is not phosphorylated. Phosphorylation increases the trimeric form, and its dephosphorylation favors a kinase-inactive monomeric form. Both isoform 1 and isoform 2 can undergo autophosphorylation. As to expression, widely expressed. Isoform 1 and isoform 2 are expressed in the bladder smooth muscle.

It localises to the nucleus. The protein localises to the PML body. Its subcellular location is the cytoplasm. The protein resides in the cytoskeleton. It is found in the microtubule organizing center. It localises to the centrosome. The protein localises to the chromosome. Its subcellular location is the centromere. The protein resides in the spindle. It is found in the midbody. The enzyme catalyses L-seryl-[protein] + ATP = O-phospho-L-seryl-[protein] + ADP + H(+). It catalyses the reaction L-threonyl-[protein] + ATP = O-phospho-L-threonyl-[protein] + ADP + H(+). With respect to regulation, a sequential activation is proposed: autophosphorylation at consensus sites is leading to dimerization of the catalytic domain stabilized by phosphorylation at Ser-50 and activation segment exchange (producing an active confirmation of both kinase modules in trans) followed by phosphorylation at Thr-180 in the activation segment and at other regulatory sites. Phosphorylation at Thr-180, Thr-225 and Thr-265 is essential for activity. Oligomerization is required for full enzymatic activity. Inhibited by pyridone-6 (K00225), a potent, ATP-competitive inhibitor. In terms of biological role, serine/threonine kinase which is involved in the regulation of apoptosis, autophagy, transcription, translation and actin cytoskeleton reorganization. Involved in the regulation of smooth muscle contraction. Regulates both type I (caspase-dependent) apoptotic and type II (caspase-independent) autophagic cell deaths signal, depending on the cellular setting. Involved in regulation of starvation-induced autophagy. Regulates myosin phosphorylation in both smooth muscle and non-muscle cells. In smooth muscle, regulates myosin either directly by phosphorylating MYL12B and MYL9 or through inhibition of smooth muscle myosin phosphatase (SMPP1M) via phosphorylation of PPP1R12A; the inhibition of SMPP1M functions to enhance muscle responsiveness to Ca(2+) and promote a contractile state. Phosphorylates MYL12B in non-muscle cells leading to reorganization of actin cytoskeleton. Isoform 2 can phosphorylate myosin, PPP1R12A and MYL12B. Overexpression leads to condensation of actin stress fibers into thick bundles. Involved in actin filament focal adhesion dynamics. The function in both reorganization of actin cytoskeleton and focal adhesion dissolution is modulated by RhoD. Positively regulates canonical Wnt/beta-catenin signaling through interaction with NLK and TCF7L2. Phosphorylates RPL13A on 'Ser-77' upon interferon-gamma activation which is causing RPL13A release from the ribosome, RPL13A association with the GAIT complex and its subsequent involvement in transcript-selective translation inhibition. Enhances transcription from AR-responsive promoters in a hormone- and kinase-dependent manner. Involved in regulation of cell cycle progression and cell proliferation. May be a tumor suppressor. The protein is Death-associated protein kinase 3 (DAPK3) of Homo sapiens (Human).